The following is a 265-amino-acid chain: Exosome complex component Rrp4 (265 aa).

The region spanning 65-137 (GDNVIGKIVD…EVNNIDLTTK (73 aa)) is the S1 motif domain. The region spanning 147–205 (KGGQIVKITPSRVPRVIGRGGSMINMIKKLTMTRIIVGQNGWIWVSGKNDALEKLAIEA) is the KH domain. The tract at residues 241–265 (EIPKLEEEPQGEDEVNGNDGEARGA) is disordered.

This sequence belongs to the RRP4 family. Component of the archaeal exosome complex. Forms a trimer of Rrp4 and/or Csl4 subunits. The trimer associates with a hexameric ring-like arrangement composed of 3 Rrp41-Rrp42 heterodimers.

Its subcellular location is the cytoplasm. Functionally, non-catalytic component of the exosome, which is a complex involved in RNA degradation. Increases the RNA binding and the efficiency of RNA degradation. Confers strong poly(A) specificity to the exosome. The sequence is that of Exosome complex component Rrp4 from Pyrococcus abyssi (strain GE5 / Orsay).